We begin with the raw amino-acid sequence, 473 residues long: H(+)/Cl(-) exchange transporter ClcA (473 aa).

The Cytoplasmic segment spans residues 1–32; the sequence is MKTDTPSLETPQAARLRRRQLIRQLLERDKTP. A helical transmembrane segment spans residues 33 to 69; the sequence is LAILFMAAVVGTLVGLAAVAFDKGVAWLQNQRMGALV. Residues 70 to 76 lie on the Periplasmic side of the membrane; it reads HTADNYP. The chain crosses the membrane as a helical span at residues 77 to 100; it reads LLLTVAFLCSAVLAMFGYFLVRKY. Residues 106–110 carry the Selectivity filter part_1 motif; that stretch reads GSGIP. Serine 107 serves as a coordination point for chloride. Positions 109-116 form an intramembrane region, helical; it reads IPEIEGAL. At 117–123 the chain is on the cytoplasmic side; it reads EDQRPVR. The next 2 membrane-spanning stretches (helical) occupy residues 124-141 and 148-166; these read WWRV…TLGG and EGPT…LDVF. Positions 146–150 match the Selectivity filter part_2 motif; it reads GREGP. The Cytoplasmic segment spans residues 167–176; sequence RLKGDEARHT. 2 consecutive intramembrane regions (helical) follow at residues 177–189 and 193–201; these read LLAT…LAAA and PLAGILFII. Over 202–214 the chain is Cytoplasmic; it reads EEMRPQFRYTLIS. Residues 215–232 traverse the membrane as a helical segment; it reads IKAVFIGVIMSTIMYRIF. At 233–252 the chain is on the periplasmic side; it reads NHEVALIDVGKLSDAPLNTL. Residues 253–281 traverse the membrane as a helical segment; sequence WLYLILGIIFGIFGPIFNKWVLGMQDLLH. At 282-287 the chain is on the cytoplasmic side; the sequence is RVHGGN. The helical transmembrane segment at 288 to 309 threads the bilayer; that stretch reads ITKWVLMGGAIGGLCGLLGFVA. Topologically, residues 310 to 329 are periplasmic; it reads PATSGGGFNLIPIATAGNFS. The next 2 membrane-spanning stretches (helical) occupy residues 330 to 349 and 355 to 376; these read MGML…LCFS and GIFA…MVAV. The short motif at 355–359 is the Selectivity filter part_3 element; that stretch reads GIFAP. Chloride-binding residues include isoleucine 356 and phenylalanine 357. Over 377 to 386 the chain is Periplasmic; that stretch reads ELFPQYHLEA. An intramembrane region (helical) is located at residues 387 to 401; it reads GTFAIAGMGALLAAS. The segment at residues 402 to 404 is an intramembrane region (note=Loop between two helices); sequence IRA. The segment at residues 405–416 is an intramembrane region (helical); it reads PLTGIILVLEMT. Positions 417–421 form an intramembrane region, note=Loop between two helices; it reads DNYQL. Residues 422–438 form a helical membrane-spanning segment; it reads ILPMIITGLGATLLAQF. The Cytoplasmic segment spans residues 439–473; it reads TGGKPLYSAILARTLAKQEAEQLARSKAASARENT. Tyrosine 445 is a binding site for chloride.

The protein belongs to the chloride channel (TC 2.A.49) family. ClcA subfamily. Homodimer.

Its subcellular location is the cell inner membrane. It catalyses the reaction 2 chloride(in) + H(+)(out) = 2 chloride(out) + H(+)(in). Proton-coupled chloride transporter. Functions as antiport system and exchanges two chloride ions for 1 proton. Probably acts as an electrical shunt for an outwardly-directed proton pump that is linked to amino acid decarboxylation, as part of the extreme acid resistance (XAR) response. This Escherichia coli O45:K1 (strain S88 / ExPEC) protein is H(+)/Cl(-) exchange transporter ClcA.